Consider the following 120-residue polypeptide: NAD(P)H-quinone oxidoreductase subunit 3, chloroplastic (120 aa).

The next 3 helical transmembrane spans lie at 9–29 (IFWA…XISG), 64–84 (MFAL…PWAM), and 88–108 (VLGV…IVGL).

Belongs to the complex I subunit 3 family. NDH is composed of at least 16 different subunits, 5 of which are encoded in the nucleus.

Its subcellular location is the plastid. It localises to the chloroplast thylakoid membrane. The enzyme catalyses a plastoquinone + NADH + (n+1) H(+)(in) = a plastoquinol + NAD(+) + n H(+)(out). It carries out the reaction a plastoquinone + NADPH + (n+1) H(+)(in) = a plastoquinol + NADP(+) + n H(+)(out). Functionally, NDH shuttles electrons from NAD(P)H:plastoquinone, via FMN and iron-sulfur (Fe-S) centers, to quinones in the photosynthetic chain and possibly in a chloroplast respiratory chain. The immediate electron acceptor for the enzyme in this species is believed to be plastoquinone. Couples the redox reaction to proton translocation, and thus conserves the redox energy in a proton gradient. The chain is NAD(P)H-quinone oxidoreductase subunit 3, chloroplastic from Eucalyptus globulus subsp. globulus (Tasmanian blue gum).